Consider the following 135-residue polypeptide: Hydroxylaminobenzene mutase HabA (135 aa).

The next 4 membrane-spanning stretches (helical) occupy residues 5–25 (LFAS…LVPV), 33–55 (VAGH…LWPY), 67–87 (FWLL…AALW), and 113–133 (FLLF…LIGI).

It is found in the cell membrane. The catalysed reaction is N-phenylhydroxylamine = 2-aminophenol. Catalyzes the rearrangement of hydroxylaminobenzene to 2-aminophenol. Involved in the degradation of nitrobenzene. The chain is Hydroxylaminobenzene mutase HabA (habA) from Ectopseudomonas oleovorans (Pseudomonas oleovorans).